Consider the following 387-residue polypeptide: Sharpin (387 aa).

The interval 1 to 180 (MAPPAGGAAA…EREELAGSLA (180 aa)) is self-association. Polar residues predominate over residues 122–132 (EGQNGSKSNSP). Residues 122–169 (EGQNGSKSNSPPALGPEACPVSLPSPPEASTLKGPPPEADLPRSPGNL) form a disordered region. Position 165 is a phosphoserine (S165). The tract at residues 175-310 (LAGSLARAIA…SAPREAPATG (136 aa)) is interaction with SHANK1. The Ubiquitin-like domain occupies 219-288 (IRLQVTLEDA…PERSLASYGV (70 aa)). Positions 305–349 (EAPATGPSPQHPQKMDGELGRLFPPSLGLPPGPQPAASSLPSPLQ) are disordered. Position 312 is a phosphoserine (S312). Positions 339–349 (PAASSLPSPLQ) are enriched in low complexity. The RanBP2-type zinc-finger motif lies at 348–377 (LQPSWSCPSCTFINAPDRPGCEMCSTQRPC).

As to quaternary structure, monomer and homodimer. Component of the LUBAC complex (linear ubiquitin chain assembly complex) which consists of SHARPIN, RBCK1 and RNF31. LUBAC has a MW of approximately 600 kDa suggesting a heteromultimeric assembly of its subunits. Associates with the TNF-R1 signaling complex (TNF-RSC) in a stimulation-dependent manner. Interacts with EYA1, EYA2, SHANK1 and SHANK3 (via ANK repeats). In terms of tissue distribution, highly expressed in skeletal muscle and placenta and at lower levels in brain, heart, colon without mucosa, thymus, spleen, kidney, liver, small intestine, lung and peripheral blood leukocytes. Up-regulated in various tumor tissues such as kidney, liver, ovary and pancreas tumors.

The protein resides in the cytoplasm. The protein localises to the cytosol. It is found in the synapse. The protein operates within protein modification; protein ubiquitination. In terms of biological role, component of the LUBAC complex which conjugates linear polyubiquitin chains in a head-to-tail manner to substrates and plays a key role in NF-kappa-B activation and regulation of inflammation. LUBAC conjugates linear polyubiquitin to IKBKG and RIPK1 and is involved in activation of the canonical NF-kappa-B and the JNK signaling pathways. Linear ubiquitination mediated by the LUBAC complex interferes with TNF-induced cell death and thereby prevents inflammation. LUBAC is recruited to the TNF-R1 signaling complex (TNF-RSC) following polyubiquitination of TNF-RSC components by BIRC2 and/or BIRC3 and to conjugate linear polyubiquitin to IKBKG and possibly other components contributing to the stability of the complex. The LUBAC complex is also involved in innate immunity by conjugating linear polyubiquitin chains at the surface of bacteria invading the cytosol to form the ubiquitin coat surrounding bacteria. LUBAC is not able to initiate formation of the bacterial ubiquitin coat, and can only promote formation of linear polyubiquitins on pre-existing ubiquitin. The bacterial ubiquitin coat acts as an 'eat-me' signal for xenophagy and promotes NF-kappa-B activation. Together with OTULIN, the LUBAC complex regulates the canonical Wnt signaling during angiogenesis. This is Sharpin from Homo sapiens (Human).